The primary structure comprises 269 residues: Aminoglycoside (3'') (9) adenylyltransferase (269 aa).

The catalysed reaction is streptomycin + ATP = 3''-O-adenylylstreptomycin + diphosphate. The enzyme catalyses spectinomycin + ATP = 9-O-adenylylspectinomycin + diphosphate. Mediates bacterial resistance to the antibiotic spectinomycin and probably also to streptomycin. This Rhizobium radiobacter (Agrobacterium tumefaciens) protein is Aminoglycoside (3'') (9) adenylyltransferase.